Reading from the N-terminus, the 207-residue chain is Alpha-1-acid glycoprotein 1 (207 aa).

The N-terminal stretch at 1 to 18 (MALHTVLIILSLLPMLEA) is a signal peptide. Pyrrolidone carboxylic acid is present on Gln-19. N-linked (GlcNAc...) asparagine glycans are attached at residues Asn-25, Asn-34, Asn-76, Asn-94, and Asn-104. Cys-91 and Cys-184 are oxidised to a cystine.

This sequence belongs to the calycin superfamily. Lipocalin family.

The protein localises to the secreted. In terms of biological role, functions as a transport protein in the blood stream. Binds various ligands in the interior of its beta-barrel domain. Appears to function in modulating the activity of the immune system during the acute-phase reaction. The protein is Alpha-1-acid glycoprotein 1 (Orm1) of Mus musculus (Mouse).